A 287-amino-acid chain; its full sequence is Membrane protein insertase YidC 2 (287 aa).

The signal sequence occupies residues 1 to 26 (MKKKKRFKQKLLIASLVIGLVAVLSG). Cys-27 is lipidated: N-palmitoyl cysteine. Cys-27 carries the S-diacylglycerol cysteine lipid modification. The next 5 helical transmembrane spans lie at 65–85 (YAVG…PLMI), 135–155 (MMGC…YQAI), 178–198 (YILP…SMMG), 207–224 (AMIV…GITL), and 228–250 (LALY…NNPF).

Belongs to the OXA1/ALB3/YidC family. Type 2 subfamily.

It is found in the cell membrane. Required for the insertion and/or proper folding and/or complex formation of integral membrane proteins into the membrane. Involved in integration of membrane proteins that insert both dependently and independently of the Sec translocase complex, as well as at least some lipoproteins. This chain is Membrane protein insertase YidC 2, found in Listeria innocua serovar 6a (strain ATCC BAA-680 / CLIP 11262).